We begin with the raw amino-acid sequence, 66 residues long: MERMDIIIWLLAVVIVLTTLMIFLHLKTLKIIRLLFPVSKELSKKSCVFPWKKKWTKNYPPSSMYP.

The chain crosses the membrane as a helical span at residues 8–24; sequence IWLLAVVIVLTTLMIFL. K54 carries the post-translational modification N6-acetyllysine; alternate. Position 54 is an N6-succinyllysine; alternate (K54). K57 is modified (N6-acetyllysine).

It belongs to the ATPase protein 8 family. In terms of assembly, component of the ATP synthase complex composed at least of ATP5F1A/subunit alpha, ATP5F1B/subunit beta, ATP5MC1/subunit c (homooctomer), MT-ATP6/subunit a, MT-ATP8/subunit 8, ATP5ME/subunit e, ATP5MF/subunit f, ATP5MG/subunit g, ATP5MK/subunit k, ATP5MJ/subunit j, ATP5F1C/subunit gamma, ATP5F1D/subunit delta, ATP5F1E/subunit epsilon, ATP5PF/subunit F6, ATP5PB/subunit b, ATP5PD/subunit d, ATP5PO/subunit OSCP. ATP synthase complex consists of a soluble F(1) head domain (subunits alpha(3) and beta(3)) - the catalytic core - and a membrane F(0) domain - the membrane proton channel (subunits c, a, 8, e, f, g, k and j). These two domains are linked by a central stalk (subunits gamma, delta, and epsilon) rotating inside the F1 region and a stationary peripheral stalk (subunits F6, b, d, and OSCP). Interacts with PRICKLE3.

Its subcellular location is the mitochondrion membrane. Functionally, subunit 8, of the mitochondrial membrane ATP synthase complex (F(1)F(0) ATP synthase or Complex V) that produces ATP from ADP in the presence of a proton gradient across the membrane which is generated by electron transport complexes of the respiratory chain. ATP synthase complex consist of a soluble F(1) head domain - the catalytic core - and a membrane F(1) domain - the membrane proton channel. These two domains are linked by a central stalk rotating inside the F(1) region and a stationary peripheral stalk. During catalysis, ATP synthesis in the catalytic domain of F(1) is coupled via a rotary mechanism of the central stalk subunits to proton translocation. In vivo, can only synthesize ATP although its ATP hydrolase activity can be activated artificially in vitro. Part of the complex F(0) domain. The polypeptide is ATP synthase F(0) complex subunit 8 (Mammuthus primigenius (Siberian woolly mammoth)).